Consider the following 153-residue polypeptide: Endoribonuclease YbeY (153 aa).

Residues histidine 118, histidine 122, and histidine 128 each contribute to the Zn(2+) site.

Belongs to the endoribonuclease YbeY family. Zn(2+) is required as a cofactor.

Its subcellular location is the cytoplasm. Functionally, single strand-specific metallo-endoribonuclease involved in late-stage 70S ribosome quality control and in maturation of the 3' terminus of the 16S rRNA. In Staphylococcus haemolyticus (strain JCSC1435), this protein is Endoribonuclease YbeY.